An 845-amino-acid polypeptide reads, in one-letter code: Beta-mannosidase B (845 aa).

Glu-432 serves as the catalytic Proton donor. N-linked (GlcNAc...) asparagine glycans are attached at residues Asn-717 and Asn-723.

This sequence belongs to the glycosyl hydrolase 2 family. Beta-mannosidase B subfamily.

The catalysed reaction is Hydrolysis of terminal, non-reducing beta-D-mannose residues in beta-D-mannosides.. It participates in glycan metabolism; N-glycan degradation. Exoglycosidase that cleaves the single beta-linked mannose residue from the non-reducing end of beta-mannosidic oligosaccharides of various complexity and length. Prefers mannobiose over mannotriose and has no activity against polymeric mannan. Is also severely restricted by galactosyl substitutions at the +1 subsite. The sequence is that of Beta-mannosidase B (mndB) from Aspergillus clavatus (strain ATCC 1007 / CBS 513.65 / DSM 816 / NCTC 3887 / NRRL 1 / QM 1276 / 107).